Here is a 630-residue protein sequence, read N- to C-terminus: Pentatricopeptide repeat-containing protein At2g03880, mitochondrial (630 aa).

A mitochondrion-targeting transit peptide spans 1–76; that stretch reads MKSVMSKIKL…LIKCCISNRA (76 aa). PPR repeat units lie at residues 60–94, 95–125, 126–160, 161–192, 193–223, 224–258, 259–289, 292–322, 323–357, 358–388, and 394–424; these read DSAT…GHRP, MMFL…MPQR, NVIS…NVRP, NVYT…GLES, DVFV…MVTG, DAIV…GFIA, EQAT…IVKY, DLIL…MKER, DVIT…GTKP, NYIT…MKKL, and VREH…MECE. The interval 429–504 is type E motif; sequence TWRTLLGACR…EPGCSWIEVN (76 aa). The tract at residues 505-535 is type E(+) motif; sequence KQIHAFIIGDNSHPQIVEVSKKLNQLIHRLT. A type DYW motif region spans residues 536-630; sequence GIGYVPETNF…DGKCSCGDYW (95 aa).

This sequence belongs to the PPR family. PCMP-H subfamily.

The protein localises to the mitochondrion. The chain is Pentatricopeptide repeat-containing protein At2g03880, mitochondrial (PCMP-H44) from Arabidopsis thaliana (Mouse-ear cress).